The primary structure comprises 621 residues: Chaperone protein HtpG (621 aa).

The a; substrate-binding stretch occupies residues methionine 1–arginine 328. The segment at glutamate 329–arginine 544 is b. The interval phenylalanine 545 to leucine 621 is c.

The protein belongs to the heat shock protein 90 family. Homodimer.

Its subcellular location is the cytoplasm. Its function is as follows. Molecular chaperone. Has ATPase activity. In Rickettsia prowazekii (strain Madrid E), this protein is Chaperone protein HtpG.